Consider the following 899-residue polypeptide: Periodic tryptophan protein 2 homolog (899 aa).

WD repeat units lie at residues 9–52 (NLLG…TLPF), 53–92 (SHRK…VLYH), 94–132 (SFKA…DANA), 149–188 (QHFD…GFTP), 193–232 (GHRQ…GQDE), 252–291 (QNSA…MIHT), 294–334 (ISQN…YILK), 337–376 (GHFD…CIVT), 379–418 (EHTS…NFRT), 422–464 (PERL…DRLS), 465–504 (GHEG…QTSE), 507–546 (QLNS…QQAG), and 569–608 (AGTK…LLKK). The interval 639 to 668 (DEQGEASDFEDRIDRSLPGSKRGDPSARRK) is disordered. Positions 647–668 (FEDRIDRSLPGSKRGDPSARRK) are enriched in basic and acidic residues. A WD 14 repeat occupies 669-709 (NPEVRVNGVAFSPNGSAFCAASTEGLLIYSLDTTIQFDPFD). The interval 866-899 (TGSDEQPGAGGMSLNDVMQQDEGNASEDEWIGLV) is disordered. The segment covering 889–899 (NASEDEWIGLV) has biased composition (acidic residues).

The protein belongs to the WD repeat PWP2 family.

In Neurospora crassa (strain ATCC 24698 / 74-OR23-1A / CBS 708.71 / DSM 1257 / FGSC 987), this protein is Periodic tryptophan protein 2 homolog.